Consider the following 160-residue polypeptide: Nitrate reductase [NADH] (160 aa).

Thr-37 serves as a coordination point for FAD.

The protein belongs to the nitrate reductase family. In terms of assembly, homodimer. It depends on FAD as a cofactor. Heme is required as a cofactor. Requires Mo-molybdopterin as cofactor.

It catalyses the reaction nitrite + NAD(+) + H2O = nitrate + NADH + H(+). Its function is as follows. Nitrate reductase is a key enzyme involved in the first step of nitrate assimilation in plants, fungi and bacteria. In Lotus tetragonolobus (Winged pea), this protein is Nitrate reductase [NADH] (NIA).